Reading from the N-terminus, the 280-residue chain is 4-hydroxy-tetrahydrodipicolinate reductase (280 aa).

Residues 14-19 (GAAGRM), Asp40, 106-108 (ATT), and 130-133 (APSM) each bind NAD(+). Residue His166 is the Proton donor/acceptor of the active site. A (S)-2,3,4,5-tetrahydrodipicolinate-binding site is contributed by His167. Catalysis depends on Lys170, which acts as the Proton donor. 176-177 (GT) serves as a coordination point for (S)-2,3,4,5-tetrahydrodipicolinate.

It belongs to the DapB family.

Its subcellular location is the cytoplasm. The enzyme catalyses (S)-2,3,4,5-tetrahydrodipicolinate + NAD(+) + H2O = (2S,4S)-4-hydroxy-2,3,4,5-tetrahydrodipicolinate + NADH + H(+). It carries out the reaction (S)-2,3,4,5-tetrahydrodipicolinate + NADP(+) + H2O = (2S,4S)-4-hydroxy-2,3,4,5-tetrahydrodipicolinate + NADPH + H(+). Its pathway is amino-acid biosynthesis; L-lysine biosynthesis via DAP pathway; (S)-tetrahydrodipicolinate from L-aspartate: step 4/4. Functionally, catalyzes the conversion of 4-hydroxy-tetrahydrodipicolinate (HTPA) to tetrahydrodipicolinate. This chain is 4-hydroxy-tetrahydrodipicolinate reductase, found in Rhodopirellula baltica (strain DSM 10527 / NCIMB 13988 / SH1).